A 349-amino-acid chain; its full sequence is Holliday junction branch migration complex subunit RuvB (349 aa).

The interval 1-183 is large ATPase domain (RuvB-L); sequence MTDPSRLVTP…FGIPIRLNFY (183 aa). Residues Leu22, Arg23, Gly64, Lys67, Thr68, Thr69, 130 to 132, Arg173, Tyr183, and Arg220 each bind ATP; that span reads EDF. Thr68 is a binding site for Mg(2+). The interval 184–254 is small ATPAse domain (RuvB-S); it reads TIEELESIVT…IADHALGALE (71 aa). Positions 257-349 are head domain (RuvB-H); sequence SAGLDAMDRR…GLFGDTGDQE (93 aa). Arg293, Arg312, and Arg317 together coordinate DNA.

The protein belongs to the RuvB family. As to quaternary structure, homohexamer. Forms an RuvA(8)-RuvB(12)-Holliday junction (HJ) complex. HJ DNA is sandwiched between 2 RuvA tetramers; dsDNA enters through RuvA and exits via RuvB. An RuvB hexamer assembles on each DNA strand where it exits the tetramer. Each RuvB hexamer is contacted by two RuvA subunits (via domain III) on 2 adjacent RuvB subunits; this complex drives branch migration. In the full resolvosome a probable DNA-RuvA(4)-RuvB(12)-RuvC(2) complex forms which resolves the HJ.

Its subcellular location is the cytoplasm. It catalyses the reaction ATP + H2O = ADP + phosphate + H(+). Its function is as follows. The RuvA-RuvB-RuvC complex processes Holliday junction (HJ) DNA during genetic recombination and DNA repair, while the RuvA-RuvB complex plays an important role in the rescue of blocked DNA replication forks via replication fork reversal (RFR). RuvA specifically binds to HJ cruciform DNA, conferring on it an open structure. The RuvB hexamer acts as an ATP-dependent pump, pulling dsDNA into and through the RuvAB complex. RuvB forms 2 homohexamers on either side of HJ DNA bound by 1 or 2 RuvA tetramers; 4 subunits per hexamer contact DNA at a time. Coordinated motions by a converter formed by DNA-disengaged RuvB subunits stimulates ATP hydrolysis and nucleotide exchange. Immobilization of the converter enables RuvB to convert the ATP-contained energy into a lever motion, pulling 2 nucleotides of DNA out of the RuvA tetramer per ATP hydrolyzed, thus driving DNA branch migration. The RuvB motors rotate together with the DNA substrate, which together with the progressing nucleotide cycle form the mechanistic basis for DNA recombination by continuous HJ branch migration. Branch migration allows RuvC to scan DNA until it finds its consensus sequence, where it cleaves and resolves cruciform DNA. The polypeptide is Holliday junction branch migration complex subunit RuvB (Rhodopseudomonas palustris (strain ATCC BAA-98 / CGA009)).